A 402-amino-acid chain; its full sequence is Phosphoglycerate kinase (402 aa).

Substrate contacts are provided by residues 21–23, R36, 59–62, R118, and R151; these read DFN and HLGR. ATP is bound by residues K201, G293, E324, and 353–356; that span reads GGDS.

This sequence belongs to the phosphoglycerate kinase family. Monomer.

The protein resides in the cytoplasm. The enzyme catalyses (2R)-3-phosphoglycerate + ATP = (2R)-3-phospho-glyceroyl phosphate + ADP. It participates in carbohydrate degradation; glycolysis; pyruvate from D-glyceraldehyde 3-phosphate: step 2/5. This chain is Phosphoglycerate kinase, found in Thermosipho africanus (strain TCF52B).